Here is a 263-residue protein sequence, read N- to C-terminus: Urease accessory protein UreH (263 aa).

The protein belongs to the UreD family. In terms of assembly, ureH, UreF and UreG form a complex that acts as a GTP-hydrolysis-dependent molecular chaperone, activating the urease apoprotein by helping to assemble the nickel containing metallocenter of UreC. The UreE protein probably delivers the nickel.

Its subcellular location is the cytoplasm. Functionally, required for maturation of urease via the functional incorporation of the urease nickel metallocenter. The chain is Urease accessory protein UreH from Helicobacter acinonychis (strain Sheeba).